The chain runs to 217 residues: HTH-type transcriptional regulator EthR (217 aa).

The tract at residues Met-1 to Asp-22 is disordered. The region spanning Asp-21–Ala-81 is the HTH tetR-type domain. The H-T-H motif DNA-binding region spans Ser-44–Phe-63.

As to quaternary structure, homodimer.

Functionally, involved in the repression of teh monooxygenase EthA which is responsible of the formation of the active metabolite of ethionamide (ETH). The protein is HTH-type transcriptional regulator EthR (ethR) of Mycolicibacterium smegmatis (strain ATCC 700084 / mc(2)155) (Mycobacterium smegmatis).